Reading from the N-terminus, the 312-residue chain is MSAEVETSEGVDEPEEKNFGENHIRMADLSELLKEGTKEAHDRAENTKFVKDFLKGNIKKEIFKLATTALYFTYSALEEEMDRNKDHPAFAPLYFPMELHRKEALTKDMEYFFGENWEEQVQCSEAAQKYVERIHYIGQNEPELLVAHAYTRYMGDLSGGQVLKKVAQRALKLPSTGEGTQFYLFENVDNAQQFKQFYRARMNALDLNLKTKERIVEEANKAFEYNMQIFSELDQAGSAPASETVEDRIPVHDGKGDVRKCPYYAAGQVNGALEGSSCPFRAAMAVLRKPSLQLVLAAAVALAAGLLAWYYM.

Position 2 is an N-acetylserine (S2). A Phosphoserine modification is found at S2. Residue H41 participates in heme b binding. HRM repeat units follow at residues 260 to 265 and 277 to 282; these read KCPYYA and SCPFRA. C261 and C278 each carry S-nitrosocysteine.

It belongs to the heme oxygenase family. In terms of processing, S-nitrosylated by BLVRB.

It is found in the microsome. The protein resides in the endoplasmic reticulum. The catalysed reaction is heme b + 3 reduced [NADPH--hemoprotein reductase] + 3 O2 = biliverdin IXalpha + CO + Fe(2+) + 3 oxidized [NADPH--hemoprotein reductase] + 3 H2O + H(+). Its function is as follows. Heme oxygenase cleaves the heme ring at the alpha methene bridge to form biliverdin. Biliverdin is subsequently converted to bilirubin by biliverdin reductase. Under physiological conditions, the activity of heme oxygenase is highest in the spleen, where senescent erythrocytes are sequestrated and destroyed. Heme oxygenase 2 could be implicated in the production of carbon monoxide in brain where it could act as a neurotransmitter. The sequence is that of Heme oxygenase 2 (HMOX2) from Oryctolagus cuniculus (Rabbit).